A 296-amino-acid chain; its full sequence is Elongation factor Ts (296 aa).

Residues 79–82 (TDFV) are involved in Mg(2+) ion dislocation from EF-Tu.

Belongs to the EF-Ts family.

It localises to the cytoplasm. Functionally, associates with the EF-Tu.GDP complex and induces the exchange of GDP to GTP. It remains bound to the aminoacyl-tRNA.EF-Tu.GTP complex up to the GTP hydrolysis stage on the ribosome. The polypeptide is Elongation factor Ts (Paracoccus denitrificans (strain Pd 1222)).